The chain runs to 328 residues: UPF0421 protein SE_1574 (328 aa).

The next 4 membrane-spanning stretches (helical) occupy residues 26–46 (LFCMLLNLTPIFAILTAIVTI), 61–81 (LPATVIGALFAVVFTYVFGDQ), 109–129 (AVLTSVAMIPSIHEAYVFNFF), and 132–152 (LLTALIGLVTAGLVNFIILPP).

Belongs to the UPF0421 family.

The protein resides in the cell membrane. This chain is UPF0421 protein SE_1574, found in Staphylococcus epidermidis (strain ATCC 12228 / FDA PCI 1200).